Consider the following 783-residue polypeptide: BMP/retinoic acid-inducible neural-specific protein 2 (783 aa).

Positions 1–33 (MRWPCSSRFRGLWPEAAPWAVLLALGVPGWVLA) are cleaved as a signal peptide. Residues 85–281 (RYRIYREFAR…FVAAALSYIT (197 aa)) form the MACPF domain. Residues Asn185, Asn354, Asn473, Asn579, Asn626, and Asn658 are each glycosylated (N-linked (GlcNAc...) asparagine).

Belongs to the BRINP family. In terms of tissue distribution, expressed in olfactory bulb, cerebellum and neuronal layers in hippocampus.

It localises to the secreted. Inhibits neuronal cell proliferation by negative regulation of the cell cycle transition. This Rattus norvegicus (Rat) protein is BMP/retinoic acid-inducible neural-specific protein 2 (Brinp2).